A 549-amino-acid chain; its full sequence is Nectin-3 (549 aa).

The first 57 residues, 1 to 57 (MARTPGPAPLCPGGGKAQLSSAFPPAAGLLLPAPTPPPLLLLLIPLLLFSRLCGALA), serve as a signal peptide directing secretion. An Ig-like V-type domain is found at 58 to 165 (GSIIVEPHVT…GNAQSSTTVT (108 aa)). The Extracellular segment spans residues 58 to 404 (GSIIVEPHVT…ATLKDDTIGT (347 aa)). N-linked (GlcNAc...) asparagine glycans are attached at residues asparagine 73, asparagine 83, asparagine 125, asparagine 186, asparagine 222, and asparagine 331. Cysteine 78 and cysteine 148 are disulfide-bonded. 2 Ig-like C2-type domains span residues 170–258 (PTVS…KDIR) and 269–354 (PEVS…KVIY). Cystine bridges form between cysteine 193-cysteine 246 and cysteine 291-cysteine 338. The chain crosses the membrane as a helical span at residues 405–425 (IIASVVGGALFLVLVSILAGV). The Cytoplasmic segment spans residues 426 to 549 (FCYRRRRTFR…SVISRREWYV (124 aa)).

Belongs to the nectin family. As to quaternary structure, cis- and trans-homodimer. Can form trans-heterodimers with NECTIN1, NECTIN2, PVR, IGSF4B/Necl-1 and with IGSF4. Interaction between NECTIN1 and NECTIN3 on the pre- and postsynaptic sites, respectively, initiates the formation of puncta adherentia junctions between axons and dendrites. Interacts (via Cytoplasmic domain) with AFDN, providing a connection with the actin cytoskeleton. Binds with low affinity to TIGIT. In terms of tissue distribution, ubiquitous with high expression in testes. Localized in spermatids at Sertoli-spermatid junctions. Expressed in ovarian granulosa cells, but only faintly expressed after ovulation.

The protein resides in the cell membrane. It is found in the postsynaptic cell membrane. It localises to the cell junction. Its subcellular location is the adherens junction. Functionally, cell adhesion molecule that promotes cell-cell adhesion through heterophilic trans-interactions with nectins-like or other nectins, such as trans-interaction with NECTIN2 at Sertoli-spermatid junctions. Trans-interaction with PVR induces activation of CDC42 and RAC small G proteins through common signaling molecules such as SRC and RAP1. Induces endocytosis-mediated down-regulation of PVR from the cell surface, resulting in reduction of cell movement and proliferation. Involved in axon guidance by promoting contacts between the commissural axons and the floor plate cells. Also involved in the formation of cell-cell junctions, including adherens junctions and synapses. Promotes formation of checkerboard-like cellular pattern of hair cells and supporting cells in the auditory epithelium via heterophilic interaction with NECTIN1: NECTIN1 is present in the membrane of hair cells and associates with NECTIN3 on supporting cells, thereby mediating heterotypic adhesion between these two cell types. Plays a role in the morphology of the ciliary body. In Mus musculus (Mouse), this protein is Nectin-3.